The sequence spans 341 residues: Aspartate carbamoyltransferase catalytic subunit (341 aa).

Carbamoyl phosphate contacts are provided by arginine 89 and threonine 90. An L-aspartate-binding site is contributed by lysine 117. Arginine 139, histidine 169, and glutamine 172 together coordinate carbamoyl phosphate. L-aspartate is bound by residues arginine 202 and arginine 257. Carbamoyl phosphate contacts are provided by glycine 298 and proline 299.

The protein belongs to the aspartate/ornithine carbamoyltransferase superfamily. ATCase family. Heterododecamer (2C3:3R2) of six catalytic PyrB chains organized as two trimers (C3), and six regulatory PyrI chains organized as three dimers (R2).

It carries out the reaction carbamoyl phosphate + L-aspartate = N-carbamoyl-L-aspartate + phosphate + H(+). The protein operates within pyrimidine metabolism; UMP biosynthesis via de novo pathway; (S)-dihydroorotate from bicarbonate: step 2/3. Catalyzes the condensation of carbamoyl phosphate and aspartate to form carbamoyl aspartate and inorganic phosphate, the committed step in the de novo pyrimidine nucleotide biosynthesis pathway. This chain is Aspartate carbamoyltransferase catalytic subunit, found in Paraburkholderia xenovorans (strain LB400).